Here is a 219-residue protein sequence, read N- to C-terminus: MVKLLPAQEAAKIYHTNYVRNSRAVGVMWGTLTICFSVLVMALFIQPYWIGDSVSTPQAGYFGLFSYCVGNVLSSELICKGGPLDFSSIPSRAFKTAMFFVALAMFLIIGSIICFSLFFVCNTATVYKICAWMQLAAATGLMIGCLVYPDGWDSSEVRRMCGEQTGKYTLGHCTIRWAFMLAILSIGDALILSFLAFVLGYRQDKLLPDDYKADGNEEV.

The Cytoplasmic segment spans residues 1–24 (MVKLLPAQEAAKIYHTNYVRNSRA). The chain crosses the membrane as a helical span at residues 25-45 (VGVMWGTLTICFSVLVMALFI). Over 46 to 98 (QPYWIGDSVSTPQAGYFGLFSYCVGNVLSSELICKGGPLDFSSIPSRAFKTAM) the chain is Extracellular. The chain crosses the membrane as a helical span at residues 99-119 (FFVALAMFLIIGSIICFSLFF). At 120–128 (VCNTATVYK) the chain is on the cytoplasmic side. A helical transmembrane segment spans residues 129–149 (ICAWMQLAAATGLMIGCLVYP). The Extracellular segment spans residues 150 to 178 (DGWDSSEVRRMCGEQTGKYTLGHCTIRWA). Residues 179–199 (FMLAILSIGDALILSFLAFVL) form a helical membrane-spanning segment. At 200–219 (GYRQDKLLPDDYKADGNEEV) the chain is on the cytoplasmic side.

It belongs to the LHFP family. In terms of assembly, forms the MET channel composed of TMC (TMC1 or TMC2), TMIE, TOMT, CIB (CIB2 or CIB3), LHPL5 and PCDH15. Interaction with PCDH15 is required for efficient localization to hair bundles.

It is found in the cell membrane. Functionally, auxiliary subunit of the mechanotransducer (MET) non-specific cation channel complex located at the tips of the shorter stereocilia of cochlear hair cells and that mediates sensory transduction in the auditory system. The MET complex is composed of two dimeric pore-forming ion-conducting transmembrane TMC (TMC1 or TMC2) subunits, and aided by several auxiliary proteins including LHFPL5, TMIE, CIB2/3 and TOMT, and the tip-link PCDH15. Functionally couples PCDH15 to the transduction channel. The chain is LHFPL tetraspan subfamily member 5 protein from Rattus norvegicus (Rat).